The sequence spans 855 residues: DNA mismatch repair protein MutS (855 aa).

615–622 (GPNMGGKS) contributes to the ATP binding site.

It belongs to the DNA mismatch repair MutS family.

In terms of biological role, this protein is involved in the repair of mismatches in DNA. It is possible that it carries out the mismatch recognition step. This protein has a weak ATPase activity. The chain is DNA mismatch repair protein MutS from Aliivibrio salmonicida (strain LFI1238) (Vibrio salmonicida (strain LFI1238)).